Consider the following 399-residue polypeptide: G2/mitotic-specific cyclin-B2 (399 aa).

A disordered region spans residues 58–78 (PVKATKGPGKMTNTVVPPKPP).

Belongs to the cyclin family. Cyclin AB subfamily. As to quaternary structure, interacts with the CDK1 protein kinase to form a serine/threonine kinase holoenzyme complex also known as maturation promoting factor (MPF). The cyclin subunit imparts substrate specificity to the complex.

Functionally, essential for the control of the cell cycle at the G2/M (mitosis) transition. In Gallus gallus (Chicken), this protein is G2/mitotic-specific cyclin-B2 (CCNB2).